Reading from the N-terminus, the 101-residue chain is Helix-loop-helix protein 17 (101 aa).

A basic motif region spans residues 14-27 (GVRLSINLRERCRM). Positions 14 to 68 (GVRLSINLRERCRMHDLNEALDDLRAVIPYAHGGSVRKLSKIATLLLAKNHIIMQ) constitute a bHLH domain. Residues 28–68 (HDLNEALDDLRAVIPYAHGGSVRKLSKIATLLLAKNHIIMQ) form a helix-loop-helix motif region.

Expressed in neuronal tissues of the head, including sheath cells of the cephalic sensilla (CEPsh) glia.

It is found in the nucleus. In terms of biological role, probable transcription factor that regulates the expression of dopamine receptors dop-1, dop-2 and dop-3 and thus dopamine-dependent behaviors. May act redundantly with hlh-31 and hlh-32 to regulate ventral CEPsh glia functions. May play a role in chemotactic responses in larvae. The sequence is that of Helix-loop-helix protein 17 from Caenorhabditis elegans.